Here is a 208-residue protein sequence, read N- to C-terminus: N-(5'-phosphoribosyl)anthranilate isomerase (208 aa).

Belongs to the TrpF family.

The enzyme catalyses N-(5-phospho-beta-D-ribosyl)anthranilate = 1-(2-carboxyphenylamino)-1-deoxy-D-ribulose 5-phosphate. The protein operates within amino-acid biosynthesis; L-tryptophan biosynthesis; L-tryptophan from chorismate: step 3/5. The polypeptide is N-(5'-phosphoribosyl)anthranilate isomerase (Methanococcus maripaludis (strain C7 / ATCC BAA-1331)).